The chain runs to 217 residues: Endo-1,4-beta-xylanase (217 aa).

The first 17 residues, 1-17, serve as a signal peptide directing secretion; sequence MQFLIPVVILCVSLVDS. The GH11 domain maps to 20–217; the sequence is VLYNNEIGFN…SSGFADITVS (198 aa). Residues asparagine 56 and asparagine 80 are each glycosylated (N-linked (GlcNAc...) asparagine). Glutamate 107 functions as the Nucleophile in the catalytic mechanism. Glutamate 204 serves as the catalytic Proton donor.

This sequence belongs to the glycosyl hydrolase 11 (cellulase G) family. In terms of tissue distribution, expressed in larval carcasses and gut, and adult gut.

The protein resides in the secreted. It catalyses the reaction Endohydrolysis of (1-&gt;4)-beta-D-xylosidic linkages in xylans.. Its pathway is glycan degradation; xylan degradation. The protein is Endo-1,4-beta-xylanase of Phaedon cochleariae (Mustard beetle).